Here is a 287-residue protein sequence, read N- to C-terminus: uncharacterized protein (287 aa).

This is an uncharacterized protein from Acanthamoeba polyphaga mimivirus (APMV).